Reading from the N-terminus, the 208-residue chain is ATP-dependent Clp protease proteolytic subunit (208 aa).

Residue serine 105 is the Nucleophile of the active site. Histidine 130 is a catalytic residue.

It belongs to the peptidase S14 family. As to quaternary structure, fourteen ClpP subunits assemble into 2 heptameric rings which stack back to back to give a disk-like structure with a central cavity, resembling the structure of eukaryotic proteasomes.

The protein localises to the cytoplasm. The enzyme catalyses Hydrolysis of proteins to small peptides in the presence of ATP and magnesium. alpha-casein is the usual test substrate. In the absence of ATP, only oligopeptides shorter than five residues are hydrolyzed (such as succinyl-Leu-Tyr-|-NHMec, and Leu-Tyr-Leu-|-Tyr-Trp, in which cleavage of the -Tyr-|-Leu- and -Tyr-|-Trp bonds also occurs).. Functionally, cleaves peptides in various proteins in a process that requires ATP hydrolysis. Has a chymotrypsin-like activity. Plays a major role in the degradation of misfolded proteins. This Xanthomonas campestris pv. campestris (strain 8004) protein is ATP-dependent Clp protease proteolytic subunit.